Consider the following 297-residue polypeptide: Homoserine kinase (297 aa).

An ATP-binding site is contributed by proline 79 to alanine 89.

The protein belongs to the GHMP kinase family. Homoserine kinase subfamily.

The protein resides in the cytoplasm. It carries out the reaction L-homoserine + ATP = O-phospho-L-homoserine + ADP + H(+). Its pathway is amino-acid biosynthesis; L-threonine biosynthesis; L-threonine from L-aspartate: step 4/5. Catalyzes the ATP-dependent phosphorylation of L-homoserine to L-homoserine phosphate. The polypeptide is Homoserine kinase (Pyrobaculum aerophilum (strain ATCC 51768 / DSM 7523 / JCM 9630 / CIP 104966 / NBRC 100827 / IM2)).